We begin with the raw amino-acid sequence, 508 residues long: Light-independent protochlorophyllide reductase subunit B (508 aa).

Asp36 contacts [4Fe-4S] cluster. Residue Asp294 is the Proton donor of the active site. 429–430 lines the substrate pocket; the sequence is GM.

It belongs to the ChlB/BchB/BchZ family. Protochlorophyllide reductase is composed of three subunits; ChlL, ChlN and ChlB. Forms a heterotetramer of two ChlB and two ChlN subunits. Requires [4Fe-4S] cluster as cofactor.

It carries out the reaction chlorophyllide a + oxidized 2[4Fe-4S]-[ferredoxin] + 2 ADP + 2 phosphate = protochlorophyllide a + reduced 2[4Fe-4S]-[ferredoxin] + 2 ATP + 2 H2O. Its pathway is porphyrin-containing compound metabolism; chlorophyll biosynthesis (light-independent). In terms of biological role, component of the dark-operative protochlorophyllide reductase (DPOR) that uses Mg-ATP and reduced ferredoxin to reduce ring D of protochlorophyllide (Pchlide) to form chlorophyllide a (Chlide). This reaction is light-independent. The NB-protein (ChlN-ChlB) is the catalytic component of the complex. This is Light-independent protochlorophyllide reductase subunit B from Nostoc punctiforme (strain ATCC 29133 / PCC 73102).